Consider the following 423-residue polypeptide: Glycine amidinotransferase, mitochondrial (423 aa).

The N-terminal 43 residues, 1–43 (MLRVRCLRGGSRGAEAVHYIGSRLGRTLTGWVQRTFQSTQAAT), are a transit peptide targeting the mitochondrion. The tract at residues 43–63 (TASSRNSFAADDKATEPLPKD) is disordered. Residues serine 46 and serine 49 each carry the phosphoserine modification. Over residues 52-61 (ADDKATEPLP) the composition is skewed to basic and acidic residues. Aspartate 170 is a binding site for arginine. Residues aspartate 254 and histidine 303 contribute to the active site. Arginine-binding residues include aspartate 305, arginine 322, serine 354, and serine 355. Lysine 385 bears the N6-acetyllysine mark. Cysteine 407 functions as the Amidino-cysteine intermediate in the catalytic mechanism.

It belongs to the amidinotransferase family. As to quaternary structure, homodimer.

The protein resides in the mitochondrion inner membrane. It catalyses the reaction L-arginine + glycine = guanidinoacetate + L-ornithine. The catalysed reaction is 4-aminobutanoate + L-arginine = 4-guanidinobutanoate + L-ornithine. The enzyme catalyses beta-alanine + L-arginine = 3-guanidinopropanoate + L-ornithine. It carries out the reaction taurine + L-arginine = taurocyamine + L-ornithine. It participates in amine and polyamine biosynthesis; creatine biosynthesis; creatine from L-arginine and glycine: step 1/2. Functionally, transamidinase that catalyzes the transfer of the amidino group of L-arginine onto the amino moiety of acceptor metabolites such as glycine, beta-alanine, gamma-aminobutyric acid (GABA) and taurine yielding the corresponding guanidine derivatives. Catalyzes the rate-limiting step of creatine biosynthesis, namely the transfer of the amidino group from L-arginine to glycine to generate guanidinoacetate, which is then methylated by GAMT to form creatine. Provides creatine as a source for ATP generation in tissues with high energy demands, in particular skeletal muscle, heart and brain. The protein is Glycine amidinotransferase, mitochondrial (GATM) of Macaca fascicularis (Crab-eating macaque).